The following is a 227-amino-acid chain: UPF0173 metal-dependent hydrolase BPUM_2573 (227 aa).

This sequence belongs to the UPF0173 family.

This is UPF0173 metal-dependent hydrolase BPUM_2573 from Bacillus pumilus (strain SAFR-032).